Reading from the N-terminus, the 533-residue chain is Protein mono-ADP-ribosyltransferase PARP3 (533 aa).

The disordered stretch occupies residues 1 to 30 (MAPKRKASVQTEGSKKRRQGTEEEDSFRST). The residue at position 6 (lysine 6) is an N6-(ADP-ribosyl)lysine. Glutamate 12 bears the ADP-ribosyl glutamic acid mark. Residues 14–18 (SKKRR) carry the Nuclear localization signal motif. 2 positions are modified to ADP-ribosyl glutamic acid: glutamate 24 and glutamate 32. The region spanning 57–147 (GIQVHEDYDC…DRFVAQPNKY (91 aa)) is the WGR domain. At aspartate 138 the chain carries ADP-ribosyl aspartic acid. An ADP-ribosyl glutamic acid mark is found at glutamate 160, glutamate 230, glutamate 309, and glutamate 310. One can recognise a PARP alpha-helical domain in the interval 181-299 (PCSLDPATQN…DIELAQTLQA (119 aa)). Residues 313-533 (HPLDRDYQLL…RLRYLLEIHL (221 aa)) enclose the PARP catalytic domain.

It belongs to the ARTD/PARP family. As to quaternary structure, interacts with PARP1; leading to activate PARP1 in absence of DNA. Interacts with PRKDC. Interacts with XRCC5/Ku80; the interaction is dependent on nucleic acids. Interacts with XRCC6/Ku70; the interaction is dependent on nucleic acids. Interacts with EZH2, HDAC1, HDAC2, SUZ12, YY1, LRIG3 and LIG4. Post-translationally, auto-ADP-ribosylated.

The protein localises to the nucleus. It localises to the chromosome. It is found in the cytoplasm. The protein resides in the cytoskeleton. Its subcellular location is the microtubule organizing center. The protein localises to the centrosome. It localises to the centriole. It carries out the reaction L-aspartyl-[protein] + NAD(+) = 4-O-(ADP-D-ribosyl)-L-aspartyl-[protein] + nicotinamide. It catalyses the reaction L-glutamyl-[protein] + NAD(+) = 5-O-(ADP-D-ribosyl)-L-glutamyl-[protein] + nicotinamide. The enzyme catalyses L-lysyl-[protein] + NAD(+) = N(6)-(ADP-D-ribosyl)-L-lysyl-[protein] + nicotinamide + H(+). In terms of biological role, mono-ADP-ribosyltransferase that mediates mono-ADP-ribosylation of target proteins and plays a key role in the response to DNA damage. Mediates mono-ADP-ribosylation of glutamate, aspartate or lysine residues on target proteins. In contrast to PARP1 and PARP2, it is not able to mediate poly-ADP-ribosylation. Involved in DNA repair by mediating mono-ADP-ribosylation of a limited number of acceptor proteins involved in chromatin architecture and in DNA metabolism, such as histone H2B, XRCC5 and XRCC6. ADP-ribosylation follows DNA damage and appears as an obligatory step in a detection/signaling pathway leading to the reparation of DNA strand breaks. Involved in single-strand break repair by catalyzing mono-ADP-ribosylation of histone H2B on 'Glu-2' (H2BE2ADPr) of nucleosomes containing nicked DNA. Cooperates with the XRCC5-XRCC6 (Ku80-Ku70) heterodimer to limit end-resection thereby promoting accurate NHEJ. Suppresses G-quadruplex (G4) structures in response to DNA damage. Associates with a number of DNA repair factors and is involved in the response to exogenous and endogenous DNA strand breaks. Together with APLF, promotes the retention of the LIG4-XRCC4 complex on chromatin and accelerate DNA ligation during non-homologous end-joining (NHEJ). May link the DNA damage surveillance network to the mitotic fidelity checkpoint. Acts as a negative regulator of immunoglobulin class switch recombination, probably by controlling the level of AICDA /AID on the chromatin. In addition to proteins, also able to ADP-ribosylate DNA: mediates DNA mono-ADP-ribosylation of DNA strand break termini via covalent addition of a single ADP-ribose moiety to a 5'- or 3'-terminal phosphate residues in DNA containing multiple strand breaks. This chain is Protein mono-ADP-ribosyltransferase PARP3, found in Mus musculus (Mouse).